The sequence spans 83 residues: RNA-binding protein Hfq (83 aa).

Positions 10–69 (DPFLNALRREHVPVSIYLVNGIKLQGQIESFDQYVVLLRNTVTQMVYKHAISTIVPGRAV) constitute a Sm domain.

The protein belongs to the Hfq family. Homohexamer.

Functionally, RNA chaperone that binds small regulatory RNA (sRNAs) and mRNAs to facilitate mRNA translational regulation in response to envelope stress, environmental stress and changes in metabolite concentrations. Also binds with high specificity to tRNAs. This Acidovorax ebreus (strain TPSY) (Diaphorobacter sp. (strain TPSY)) protein is RNA-binding protein Hfq.